Reading from the N-terminus, the 296-residue chain is Malate--CoA ligase subunit alpha (296 aa).

CoA contacts are provided by residues 17-20, K43, and 96-98; these read TGDK and ITD. H251 (tele-phosphohistidine intermediate) is an active-site residue.

Belongs to the succinate/malate CoA ligase alpha subunit family. In terms of assembly, heterotetramer of two alpha and two beta subunits.

The enzyme catalyses (S)-malate + ATP + CoA = (S)-malyl-CoA + ADP + phosphate. The protein operates within one-carbon metabolism; formaldehyde assimilation via serine pathway. In Methylorubrum extorquens (strain ATCC 14718 / DSM 1338 / JCM 2805 / NCIMB 9133 / AM1) (Methylobacterium extorquens), this protein is Malate--CoA ligase subunit alpha (mtkB).